Consider the following 230-residue polypeptide: MTSYDEEAAINPKAVGNKSSLLKYIIGGGVLAVVGVVAVMVSLQVSGNLVKSEANTLAAQSSGAQRGDRLDLDNDDDLEDEIKEIDDKFKKEFDTLLDNVIQEVNKQLKADLNGGATAGGVNNGGDTDESSNDTDEDSNDSDSKDTDSDSKDTDSDSKDSDSNDTDSDSNGSDSKDTDSDSKDSDSKDTDSDSKDTDSDSKDSDSKDTDSDSKDTDSDSKDSDSNDTDSD.

3 N-linked (GlcNAc...) asparagine glycosylation sites follow: Asn-17, Asn-132, and Asn-139. A disordered region spans residues 112–230; it reads LNGGATAGGV…DSDSNDTDSD (119 aa). Over residues 126 to 140 the composition is skewed to acidic residues; it reads DTDESSNDTDEDSND. Residues 141-161 are compositionally biased toward basic and acidic residues; that stretch reads SDSKDTDSDSKDTDSDSKDSD. Residues Asn-163 and Asn-170 are each glycosylated (N-linked (GlcNAc...) asparagine). Over residues 173–223 the composition is skewed to basic and acidic residues; sequence DSKDTDSDSKDSDSKDTDSDSKDTDSDSKDSDSKDTDSDSKDTDSDSKDSD. Asn-225 carries N-linked (GlcNAc...) asparagine glycosylation.

In terms of tissue distribution, component of the acid-insoluble organic matrix of calcified layers of the shell (at protein level).

Its subcellular location is the secreted. The chain is Aspartate and serine-rich protein from Lottia gigantea (Giant owl limpet).